Reading from the N-terminus, the 603-residue chain is Polypeptide N-acetylgalactosaminyltransferase 9 (603 aa).

Residues 1 to 6 (MAVARK) are Cytoplasmic-facing. The chain crosses the membrane as a helical; Signal-anchor for type II membrane protein span at residues 7 to 29 (IRTLLTVNILVFVGIVLFSVYCR). Residues 30 to 603 (LQGRSQELVR…IRNWIKHARH (574 aa)) are Lumenal-facing. Intrachain disulfides connect Cys-141–Cys-372 and Cys-363–Cys-442. Residues 150–261 (LPQVSVVFIF…TGWAEPALSR (112 aa)) are catalytic subdomain A. Substrate is bound by residues Asp-191 and Arg-222. Residues Asp-245, His-247, and His-377 each coordinate Mn(2+). Residues 318–380 (PIRTPAMIGC…PCSRVAHIER (63 aa)) are catalytic subdomain B. The substrate site is built by Arg-380 and Tyr-385. An N-linked (GlcNAc...) asparagine glycan is attached at Asn-460. In terms of domain architecture, Ricin B-type lectin spans 464–600 (TYGEVRNSKA…KWMIRNWIKH (137 aa)). Intrachain disulfides connect Cys-477-Cys-493, Cys-525-Cys-540, and Cys-567-Cys-587.

Belongs to the glycosyltransferase 2 family. GalNAc-T subfamily. The cofactor is Mn(2+). In terms of tissue distribution, specifically expressed in brain. Not expressed in heart, placenta, lung, liver, skeletal muscle, kidney, pancreas, spleen, thymus, prostate, testis, ovary, small intestine, colon and leukocyte. In brain, it is expressed in cerebellum, frontal lobe, temporal lobe, putamen and spinal cord, weakly expressed in cerebral cortex. Not expressed in medulla and occipital pole.

The protein resides in the golgi apparatus membrane. The catalysed reaction is L-seryl-[protein] + UDP-N-acetyl-alpha-D-galactosamine = a 3-O-[N-acetyl-alpha-D-galactosaminyl]-L-seryl-[protein] + UDP + H(+). It carries out the reaction L-threonyl-[protein] + UDP-N-acetyl-alpha-D-galactosamine = a 3-O-[N-acetyl-alpha-D-galactosaminyl]-L-threonyl-[protein] + UDP + H(+). The protein operates within protein modification; protein glycosylation. Functionally, catalyzes the initial reaction in O-linked oligosaccharide biosynthesis, the transfer of an N-acetyl-D-galactosamine residue to a serine or threonine residue on the protein receptor. Does not glycosylate apomucin or SDC3. The protein is Polypeptide N-acetylgalactosaminyltransferase 9 (GALNT9) of Homo sapiens (Human).